We begin with the raw amino-acid sequence, 172 residues long: MDFKQHIKEVADYPKEGISFKDITSLMQNGEVYKKSVDELVAYARERGAELIAGPEARGFVVGCPAAYALELGFVPVRKEGKLPRETVRVSYGLEYGTDILTMHKDSIQPGQQVVILDDLLATGGTIEATIKMIEQLGGVVAGIGFLIELDGLGGRERLEGYDVFSLIRYED.

It belongs to the purine/pyrimidine phosphoribosyltransferase family. Homodimer.

The protein localises to the cytoplasm. The catalysed reaction is AMP + diphosphate = 5-phospho-alpha-D-ribose 1-diphosphate + adenine. It functions in the pathway purine metabolism; AMP biosynthesis via salvage pathway; AMP from adenine: step 1/1. Functionally, catalyzes a salvage reaction resulting in the formation of AMP, that is energically less costly than de novo synthesis. The chain is Adenine phosphoribosyltransferase from Exiguobacterium sp. (strain ATCC BAA-1283 / AT1b).